The following is a 331-amino-acid chain: L-lactate dehydrogenase A chain (331 aa).

NAD(+) contacts are provided by residues 29–57 and arginine 98; that span reads GMVG…MEDK. The substrate site is built by arginine 105, asparagine 137, and arginine 168. Position 137 (asparagine 137) interacts with NAD(+). Catalysis depends on histidine 192, which acts as the Proton acceptor. Threonine 247 lines the substrate pocket.

The protein belongs to the LDH/MDH superfamily. LDH family. Homotetramer.

The protein localises to the cytoplasm. The catalysed reaction is (S)-lactate + NAD(+) = pyruvate + NADH + H(+). It functions in the pathway fermentation; pyruvate fermentation to lactate; (S)-lactate from pyruvate: step 1/1. In terms of biological role, interconverts simultaneously and stereospecifically pyruvate and lactate with concomitant interconversion of NADH and NAD(+). In Notothenia neglecta (Yellowbelly rockcod), this protein is L-lactate dehydrogenase A chain (ldha).